Consider the following 195-residue polypeptide: dCTP deaminase (195 aa).

Residues 110–115 (RSSLAR), D128, 136–138 (VLE), Y171, K178, and Q182 contribute to the dCTP site. The active-site Proton donor/acceptor is the E138.

It belongs to the dCTP deaminase family. In terms of assembly, homotrimer.

The catalysed reaction is dCTP + H2O + H(+) = dUTP + NH4(+). The protein operates within pyrimidine metabolism; dUMP biosynthesis; dUMP from dCTP (dUTP route): step 1/2. Functionally, catalyzes the deamination of dCTP to dUTP. The polypeptide is dCTP deaminase (Idiomarina loihiensis (strain ATCC BAA-735 / DSM 15497 / L2-TR)).